The chain runs to 156 residues: Peptidyl-prolyl cis-trans isomerase cypE (156 aa).

A PPIase cyclophilin-type domain is found at 2–155; that stretch reads TEQTVTLQTT…DEIRIIKATA (154 aa).

The protein belongs to the cyclophilin-type PPIase family. In terms of assembly, interacts with snwA.

The protein localises to the cytoplasm. It localises to the nucleus. The catalysed reaction is [protein]-peptidylproline (omega=180) = [protein]-peptidylproline (omega=0). Its function is as follows. Catalyzes the cis-trans isomerization of proline imidic peptide bonds in oligopeptides. Plays a role in protein folding, transport and assembly. The chain is Peptidyl-prolyl cis-trans isomerase cypE (cypE) from Dictyostelium discoideum (Social amoeba).